The chain runs to 111 residues: Putative carnobacteriocin-B2 immunity protein (111 aa).

Its function is as follows. Could impart immunity to carnobacteriocin-B2 to naturally sensitive host strains. This is Putative carnobacteriocin-B2 immunity protein from Carnobacterium maltaromaticum (Carnobacterium piscicola).